A 163-amino-acid chain; its full sequence is Large ribosomal subunit protein uL11 (163 aa).

A disordered region spans residues Met1–Pro26.

It belongs to the universal ribosomal protein uL11 family. Part of the ribosomal stalk of the 50S ribosomal subunit. Interacts with L10 and the large rRNA to form the base of the stalk. L10 forms an elongated spine to which L12 dimers bind in a sequential fashion forming a multimeric L10(L12)X complex.

Forms part of the ribosomal stalk which helps the ribosome interact with GTP-bound translation factors. The sequence is that of Large ribosomal subunit protein uL11 from Halobacterium salinarum (strain ATCC 29341 / DSM 671 / R1).